A 260-amino-acid chain; its full sequence is Hemin import ATP-binding protein HmuV (260 aa).

In terms of domain architecture, ABC transporter spans 6–242 (LSGRNISMKY…ERIEQVYGYR (237 aa)). 38-45 (GPNGAGKS) is an ATP binding site.

This sequence belongs to the ABC transporter superfamily. Heme (hemin) importer (TC 3.A.1.14.5) family. In terms of assembly, the complex is composed of two ATP-binding proteins (HmuV), two transmembrane proteins (HmuU) and a solute-binding protein (HmuT).

It is found in the cell inner membrane. Part of the ABC transporter complex HmuTUV involved in hemin import. Responsible for energy coupling to the transport system. The polypeptide is Hemin import ATP-binding protein HmuV (Vibrio parahaemolyticus serotype O3:K6 (strain RIMD 2210633)).